A 492-amino-acid chain; its full sequence is Probable cytochrome P450 516B1 (492 aa).

The chain crosses the membrane as a helical span at residues 1-17 (MYLILSLIIFLAYVAFH). Cys-438 is a binding site for heme.

It belongs to the cytochrome P450 family. Requires heme as cofactor.

It localises to the membrane. In Dictyostelium discoideum (Social amoeba), this protein is Probable cytochrome P450 516B1 (cyp516B1).